Reading from the N-terminus, the 109-residue chain is Nucleoid-associated protein VS_0917 (109 aa).

2 disordered regions span residues 1 to 22 (MFGK…ERMQ) and 88 to 109 (QKEK…KMPF). Residues 9–18 (NMMKQAQQMQ) are compositionally biased toward low complexity.

Belongs to the YbaB/EbfC family. In terms of assembly, homodimer.

The protein localises to the cytoplasm. It is found in the nucleoid. Binds to DNA and alters its conformation. May be involved in regulation of gene expression, nucleoid organization and DNA protection. This is Nucleoid-associated protein VS_0917 from Vibrio atlanticus (strain LGP32) (Vibrio splendidus (strain Mel32)).